Consider the following 347-residue polypeptide: MAQELAAPLSCGQPPGQNITETTTDPWDEGDLRFEPSNSMVHSFSSSSESNLSLSVGYFPCEDTLSCEDTLSCEDSSSEGPSMHFVPPIQGSWRTENTGRLLARRDQIQDDPEQFCKLSITLAWDVDMASNNSDSTTNCDLSGDNKDKHPKEKTQLTLSKLDGLVQKLEKFLENQKDDKDDDSVFPESAQEEDSQLPSSSLPGMAQVSHQEYGSCQDLAKFNPLENEDVNQFPQIHPRLQNQELAKIISKATGSQGTDIAEISSVLPGPPEKEDTHSSTGALSCLNFRWVFRWLRPQVRSSLLGREDPREANERPRELARKKRFSYRSKRIQPQESFELGHPIPPDF.

Disordered regions lie at residues 1–40, 72–92, 133–158, 173–209, and 306–347; these read MAQELAAPLSCGQPPGQNITETTTDPWDEGDLRFEPSNSM, SCEDSSSEGPSMHFVPPIQGS, SDSTTNCDLSGDNKDKHPKEKTQLTL, ENQKDDKDDDSVFPESAQEEDSQLPSSSLPGMAQVSH, and EDPR…PPDF. Residues 15–25 show a composition bias toward polar residues; that stretch reads PGQNITETTTD. A compositionally biased stretch (basic and acidic residues) spans 143–154; that stretch reads GDNKDKHPKEKT. Acidic residues predominate over residues 179-194; that stretch reads KDDDSVFPESAQEEDS. Positions 195–209 are enriched in polar residues; sequence QLPSSSLPGMAQVSH. The segment covering 306 to 318 has biased composition (basic and acidic residues); that stretch reads EDPREANERPREL. Residues 319 to 330 are compositionally biased toward basic residues; the sequence is ARKKRFSYRSKR.

This is an uncharacterized protein from Bos taurus (Bovine).